The chain runs to 177 residues: Large ribosomal subunit protein uL6 (177 aa).

The protein belongs to the universal ribosomal protein uL6 family. As to quaternary structure, part of the 50S ribosomal subunit.

Functionally, this protein binds to the 23S rRNA, and is important in its secondary structure. It is located near the subunit interface in the base of the L7/L12 stalk, and near the tRNA binding site of the peptidyltransferase center. The sequence is that of Large ribosomal subunit protein uL6 from Edwardsiella ictaluri (strain 93-146).